Consider the following 142-residue polypeptide: Large ribosomal subunit protein uL13 (142 aa).

The protein belongs to the universal ribosomal protein uL13 family. As to quaternary structure, part of the 50S ribosomal subunit.

Functionally, this protein is one of the early assembly proteins of the 50S ribosomal subunit, although it is not seen to bind rRNA by itself. It is important during the early stages of 50S assembly. The chain is Large ribosomal subunit protein uL13 from Glaesserella parasuis serovar 5 (strain SH0165) (Haemophilus parasuis).